Reading from the N-terminus, the 239-residue chain is uncharacterized protein (239 aa).

The interval 104–127 (LPATSQSSQPKSTNSSTESSSIGQ) is disordered. The segment covering 107-127 (TSQSSQPKSTNSSTESSSIGQ) has biased composition (low complexity). A coiled-coil region spans residues 134–202 (ENEINLNKNK…HFIQNNQESF (69 aa)). Residues 211–231 (VKIGSAFIIYIFYNVLFFIIV) traverse the membrane as a helical segment.

The protein localises to the membrane. This is an uncharacterized protein from Dictyostelium discoideum (Social amoeba).